The chain runs to 116 residues: Flagellar transcriptional regulator FlhD (116 aa).

This sequence belongs to the FlhD family. Homodimer; disulfide-linked. Forms a heterohexamer composed of two FlhC and four FlhD subunits. Each FlhC binds a FlhD dimer, forming a heterotrimer, and a hexamer assembles by dimerization of two heterotrimers.

It localises to the cytoplasm. Functions in complex with FlhC as a master transcriptional regulator that regulates transcription of several flagellar and non-flagellar operons by binding to their promoter region. Activates expression of class 2 flagellar genes, including fliA, which is a flagellum-specific sigma factor that turns on the class 3 genes. Also regulates genes whose products function in a variety of physiological pathways. In Pantoea ananatis (strain LMG 20103), this protein is Flagellar transcriptional regulator FlhD.